Here is a 174-residue protein sequence, read N- to C-terminus: Co-chaperone protein HscB homolog (174 aa).

Residues 2-74 (NYFELFSLLP…IQRAEHLLAL (73 aa)) form the J domain.

It belongs to the HscB family. As to quaternary structure, interacts with HscA and stimulates its ATPase activity.

Its function is as follows. Co-chaperone involved in the maturation of iron-sulfur cluster-containing proteins. Seems to help targeting proteins to be folded toward HscA. The protein is Co-chaperone protein HscB homolog of Shewanella pealeana (strain ATCC 700345 / ANG-SQ1).